The primary structure comprises 424 residues: MEDNAGDCGGMTAFALRLAKRLADVGVSSNKNLVFSPASLYAALALVAAGARGTTLDELLALLGAASLDDLEESVRRAVEVGLADESASGGPRVSDACGVWHDETLELKPAYRAAAAGTYKAVTRAANFQRQPKRSRKKINKWVSKATNKLIPEILPDGSVHVDTALVLVNAIYFKGKWSNPFPRSSTTTGKFHRLDGSSVDVPFMSSREDQYIGFHDGFTVLKLPYHHRTMKNHGDGGDTITNSSITRAILEHYGGENVGLSMYIFLPDERDGLPALVDKMAASSSSSSFLRDHRPTRRREVGDLRVPRFKVSFYSQINGVLQGMGVTAAFDAGEADLSGMAEGVDQRGGGLVVEEVFHRAVVEVNEEGTEAAASTACTIRLLSMSYPEDFVADHPFAFFVVEETSGAVLFAGHVLDPTSSSE.

Residues 370–394 are RCL; it reads GTEAAASTACTIRLLSMSYPEDFVA.

This sequence belongs to the serpin family.

Probable serine protease inhibitor. The sequence is that of Serpin-Z2A from Oryza sativa subsp. japonica (Rice).